Here is a 526-residue protein sequence, read N- to C-terminus: Fusicoccadiene 8-ol C-16-hydroxylase (526 aa).

The helical transmembrane segment at A34 to L56 threads the bilayer. N309, N418, and N434 each carry an N-linked (GlcNAc...) asparagine glycan. A heme-binding site is contributed by C470.

Belongs to the cytochrome P450 family. Requires heme as cofactor.

The protein resides in the membrane. Its pathway is mycotoxin biosynthesis. Functionally, cytochrome P450 monooxygenase; part of the 2 gene clusters that mediate the biosynthesis of fusicoccins, diterpene glucosides that display phytohormone-like activity and function as potent activators of plasma membrane H(+)-ATPases in plants by modifying 14-3-3 proteins and cause the plant disease constriction canker. The first step in the pathway is performed by the fusicoccadiene synthase PaFS that possesses both prenyl transferase and terpene cyclase activity, converting isopentenyl diphosphate and dimethylallyl diphosphate into geranylgeranyl diphosphate (GGDP) and successively converting GGDP into fusicocca-2,10(14)-diene, a precursor for fusicoccin H. The second step is the oxidation at the C-8 position by the cytochrome P450 monooxygenase PaP450-2 to yield fusicocca-2,10(14)-diene-8-beta-ol. The cytochrome P450 monooxygenase PaP450-1 then catalyzes the hydroxylation at the C-16 position to produce fusicocca-2,10(14)-diene-8-beta,16-diol. The dioxygenase fc-dox then catalyzes the 16-oxydation of fusicocca-2,10(14)-diene-8-beta,16-diol to yield an aldehyde (8-beta-hydroxyfusicocca-1,10(14)-dien-16-al). The short-chain dehydrogenase/reductase fc-sdr catalyzes the reduction of the aldehyde to yield fusicocca-1,10(14)-diene-8-beta,16-diol. The next step is the hydroxylation at C-9 performed by the cytochrome P450 monooxygenase PaP450-3 that leads to fusicoccin H aglycon which is glycosylated to fusicoccin H by the O-glycosyltransferase PaGT. Hydroxylation at C-12 by the cytochrome P450 monooxygenase PaP450-4 leads then to the production of fusicoccin Q and is followed by methylation by the O-methyltransferase PaMT to yield fusicoccin P. Fusicoccin P is further converted to fusicoccin J via prenylation by the O-glucose prenyltransferase PaPT. Cytochrome P450 monooxygenase PaP450-5 then performs hydroxylation at C-19 to yield dideacetyl-fusicoccin A which is acetylated to 3'-O-deacetyl-fusicoccin A by the O-acetyltransferase PaAT-2. Finally, a another acetylation by the O-acetyltransferase PaAT-1 yields fusicoccin A. The sequence is that of Fusicoccadiene 8-ol C-16-hydroxylase from Phomopsis amygdali (Fusicoccum amygdali).